The sequence spans 918 residues: Dual serine/threonine and tyrosine protein kinase (918 aa).

Over residues 1–19 the composition is skewed to basic and acidic residues; the sequence is MQKDGTRSSRRMEEGDRRN. Residues 1–29 form a disordered region; that stretch reads MQKDGTRSSRRMEEGDRRNGSTGSSGSVS. The Protein kinase domain occupies 643–897; sequence PRIGRELGRG…PLMGIVQPML (255 aa). ATP is bound by residues 649-657 and Lys-672; that span reads LGRGQYGVV. Catalysis depends on Asp-768, which acts as the Proton acceptor.

The protein belongs to the protein kinase superfamily. Ser/Thr protein kinase family.

The protein localises to the cytoplasm. The protein resides in the cell membrane. It localises to the apical cell membrane. Its subcellular location is the basolateral cell membrane. It is found in the cell junction. The enzyme catalyses L-seryl-[protein] + ATP = O-phospho-L-seryl-[protein] + ADP + H(+). It carries out the reaction L-threonyl-[protein] + ATP = O-phospho-L-threonyl-[protein] + ADP + H(+). It catalyses the reaction L-tyrosyl-[protein] + ATP = O-phospho-L-tyrosyl-[protein] + ADP + H(+). Its function is as follows. May act as a positive regulator of ERK phosphorylation downstream of fibroblast growth factor-receptor activation. May induce both caspase-dependent apoptosis and caspase-independent cell death. May play a role in the embryonic development. The chain is Dual serine/threonine and tyrosine protein kinase (dstyk) from Xenopus tropicalis (Western clawed frog).